The following is a 119-amino-acid chain: NADH-quinone oxidoreductase subunit A (119 aa).

3 helical membrane-spanning segments follow: residues 7-27 (FPVL…MFLG), 63-83 (LIAI…PWGV), and 88-108 (IGWF…VGFV).

The protein belongs to the complex I subunit 3 family. In terms of assembly, NDH-1 is composed of 14 different subunits. Subunits NuoA, H, J, K, L, M, N constitute the membrane sector of the complex.

It localises to the cell membrane. The catalysed reaction is a quinone + NADH + 5 H(+)(in) = a quinol + NAD(+) + 4 H(+)(out). Its function is as follows. NDH-1 shuttles electrons from NADH, via FMN and iron-sulfur (Fe-S) centers, to quinones in the respiratory chain. The immediate electron acceptor for the enzyme in this species is believed to be ubiquinone. Couples the redox reaction to proton translocation (for every two electrons transferred, four hydrogen ions are translocated across the cytoplasmic membrane), and thus conserves the redox energy in a proton gradient. This is NADH-quinone oxidoreductase subunit A from Polynucleobacter asymbioticus (strain DSM 18221 / CIP 109841 / QLW-P1DMWA-1) (Polynucleobacter necessarius subsp. asymbioticus).